A 352-amino-acid chain; its full sequence is Beta-1,4-xylanase (352 aa).

Positions 1–23 are cleaved as a signal peptide; the sequence is MINQRFSILVLLLILLTFSLGFL. The GH10 domain occupies 29–352; that stretch reads GMEIPSLKEV…KKAFWEIVKF (324 aa). Catalysis depends on Glu-155, which acts as the Proton donor. The Nucleophile role is filled by Glu-262.

Belongs to the glycosyl hydrolase 10 (cellulase F) family.

The protein localises to the secreted. The catalysed reaction is Endohydrolysis of (1-&gt;4)-beta-D-xylosidic linkages in xylans.. It participates in glycan degradation; xylan degradation. The sequence is that of Beta-1,4-xylanase (xynA) from Dictyoglomus thermophilum.